A 140-amino-acid polypeptide reads, in one-letter code: Baculoviral IAP repeat-containing protein 5 (140 aa).

The stretch at 18 to 88 is one BIR repeat; that stretch reads RIATFKNWPF…KHSPGCAFLT (71 aa). K23 is modified (N6-acetyllysine). The residue at position 34 (T34) is a Phosphothreonine; by CDK1 and CDK15. T48 is modified (phosphothreonine). Zn(2+) contacts are provided by C57, C60, E76, H77, H80, and C84. An N6-acetyllysine mark is found at K90, K110, K112, and K115. The span at 113-129 shows a compositional bias: basic and acidic residues; sequence IAKETNNKQKEFEETAK. The disordered stretch occupies residues 113-140; sequence IAKETNNKQKEFEETAKTTRQSIEQLAA. T117 is modified (phosphothreonine; by AURKB). N6-acetyllysine is present on K129. Residues 130 to 140 show a composition bias toward polar residues; sequence TTRQSIEQLAA.

It belongs to the IAP family. In terms of assembly, monomer or homodimer. Exists as a homodimer in the apo state and as a monomer in the CPC-bound state. The monomer protects cells against apoptosis more efficiently than the dimer. Only the dimeric form is capable of enhancing tubulin stability in cells. When phosphorylated, interacts with LAMTOR5/HBXIP; the resulting complex binds pro-CASP9, as well as active CASP9, but much less efficiently. Component of the chromosomal passenger complex (CPC) composed of at least BIRC5/survivin, CDCA8/borealin, INCENP, AURKB or AURKC; in the complex forms a triple-helix bundle-based subcomplex with INCENP and CDCA8. Interacts with JTB. Interacts (via BIR domain) with histone H3 phosphorylated at 'Thr-3' (H3pT3). Interacts with EVI5. Interacts with GTP-bound RAN in both the S and M phases of the cell cycle. Interacts with USP9X. Interacts with tubulin. Interacts with BIRC2/c-IAP1. The acetylated form at Lys-129 interacts with STAT3. The monomeric form deacetylated at Lys-129 interacts with XPO1/CRM1. The monomeric form interacts with XIAP/BIRC4. Both the dimeric and monomeric form can interact with DIABLO/SMAC. Interacts with BIRC6/bruce. Interacts with FBXL7; this interaction facilitates the polyubiquitination and subsequent proteasomal degradation of BIRC5 by the SCF(FBXL7) E3 ubiquitin-protein ligase complex. Ubiquitinated by the Cul9-RING ubiquitin-protein ligase complex, leading to its degradation. Ubiquitination is required for centrosomal targeting. Deubiquitinated by USP35 or USP38; leading to stabilization. In terms of processing, acetylation at Lys-129 results in its homodimerization, while deacetylation promotes the formation of monomers which heterodimerize with XPO1/CRM1 which facilitates its nuclear export. The acetylated form represses STAT3 transactivation. The dynamic equilibrium between its acetylation and deacetylation at Lys-129 determines its interaction with XPO1/CRM1, its subsequent subcellular localization, and its ability to inhibit STAT3 transactivation. Post-translationally, in vitro phosphorylation at Thr-117 by AURKB prevents interaction with INCENP and localization to mitotic chromosomes. Phosphorylation at Thr-48 by CK2 is critical for its mitotic and anti-apoptotic activities. Phosphorylation at Thr-34 by CDK15 is critical for its anti-apoptotic activity.

Its subcellular location is the cytoplasm. It is found in the nucleus. It localises to the chromosome. The protein resides in the centromere. The protein localises to the cytoskeleton. Its subcellular location is the spindle. It is found in the kinetochore. It localises to the midbody. Its function is as follows. Multitasking protein that has dual roles in promoting cell proliferation and preventing apoptosis. Component of a chromosome passage protein complex (CPC) which is essential for chromosome alignment and segregation during mitosis and cytokinesis. Acts as an important regulator of the localization of this complex; directs CPC movement to different locations from the inner centromere during prometaphase to midbody during cytokinesis and participates in the organization of the center spindle by associating with polymerized microtubules. Involved in the recruitment of CPC to centromeres during early mitosis via association with histone H3 phosphorylated at 'Thr-3' (H3pT3) during mitosis. The complex with RAN plays a role in mitotic spindle formation by serving as a physical scaffold to help deliver the RAN effector molecule TPX2 to microtubules. May counteract a default induction of apoptosis in G2/M phase. The acetylated form represses STAT3 transactivation of target gene promoters. May play a role in neoplasia. Inhibitor of CASP3 and CASP7. Essential for the maintenance of mitochondrial integrity and function. This chain is Baculoviral IAP repeat-containing protein 5 (Birc5), found in Mus musculus (Mouse).